We begin with the raw amino-acid sequence, 178 residues long: Large ribosomal subunit protein uL6 (178 aa).

Belongs to the universal ribosomal protein uL6 family. Part of the 50S ribosomal subunit.

Functionally, this protein binds to the 23S rRNA, and is important in its secondary structure. It is located near the subunit interface in the base of the L7/L12 stalk, and near the tRNA binding site of the peptidyltransferase center. This chain is Large ribosomal subunit protein uL6, found in Staphylococcus carnosus (strain TM300).